The sequence spans 72 residues: Guanine nucleotide-binding protein G(I)/G(S)/G(O) subunit gamma-12 (72 aa).

Ser2 carries the N-acetylserine modification. Ser10 and Ser26 each carry phosphoserine. At Tyr42 the chain carries Phosphotyrosine. Ser49 carries the phosphoserine modification. Cys69 carries the cysteine methyl ester modification. Residue Cys69 is the site of S-geranylgeranyl cysteine attachment. Residues 70–72 (IIL) constitute a propeptide, removed in mature form.

The protein belongs to the G protein gamma family. In terms of assembly, g proteins are composed of 3 units, alpha, beta and gamma.

It localises to the cell membrane. In terms of biological role, guanine nucleotide-binding proteins (G proteins) are involved as a modulator or transducer in various transmembrane signaling systems. The beta and gamma chains are required for the GTPase activity, for replacement of GDP by GTP, and for G protein-effector interaction. This chain is Guanine nucleotide-binding protein G(I)/G(S)/G(O) subunit gamma-12 (Gng12), found in Mus musculus (Mouse).